A 208-amino-acid chain; its full sequence is Small ribosomal subunit protein uS4 (208 aa).

The S4 RNA-binding domain occupies Arg98–Gly168.

Belongs to the universal ribosomal protein uS4 family. As to quaternary structure, part of the 30S ribosomal subunit. Contacts protein S5. The interaction surface between S4 and S5 is involved in control of translational fidelity.

Functionally, one of the primary rRNA binding proteins, it binds directly to 16S rRNA where it nucleates assembly of the body of the 30S subunit. In terms of biological role, with S5 and S12 plays an important role in translational accuracy. The chain is Small ribosomal subunit protein uS4 from Desulforapulum autotrophicum (strain ATCC 43914 / DSM 3382 / VKM B-1955 / HRM2) (Desulfobacterium autotrophicum).